Consider the following 201-residue polypeptide: dITP/XTP pyrophosphatase (201 aa).

S7–K12 provides a ligand contact to substrate. The active-site Proton acceptor is D72. Residue D72 coordinates Mg(2+). Residues S73, F154–D157, K177, and H182–R183 contribute to the substrate site.

The protein belongs to the HAM1 NTPase family. Homodimer. The cofactor is Mg(2+).

The catalysed reaction is XTP + H2O = XMP + diphosphate + H(+). It carries out the reaction dITP + H2O = dIMP + diphosphate + H(+). The enzyme catalyses ITP + H2O = IMP + diphosphate + H(+). Its function is as follows. Pyrophosphatase that catalyzes the hydrolysis of nucleoside triphosphates to their monophosphate derivatives, with a high preference for the non-canonical purine nucleotides XTP (xanthosine triphosphate), dITP (deoxyinosine triphosphate) and ITP. Seems to function as a house-cleaning enzyme that removes non-canonical purine nucleotides from the nucleotide pool, thus preventing their incorporation into DNA/RNA and avoiding chromosomal lesions. This Leuconostoc mesenteroides subsp. mesenteroides (strain ATCC 8293 / DSM 20343 / BCRC 11652 / CCM 1803 / JCM 6124 / NCDO 523 / NBRC 100496 / NCIMB 8023 / NCTC 12954 / NRRL B-1118 / 37Y) protein is dITP/XTP pyrophosphatase.